The sequence spans 493 residues: Voltage-gated potassium channel regulatory subunit KCNF1 (493 aa).

Over 1-183 (MDASAEQSLP…KPESSCPARV (183 aa)) the chain is Cytoplasmic. Residues 184–204 (VAVLSFLLILVSSVVMCMGTI) traverse the membrane as a helical segment. Residues 205–223 (PELQVVDSEGNRVEHPTLE) lie on the Extracellular side of the membrane. Residues 224–244 (NVETACIGWFTLEYLLRLFSS) form a helical membrane-spanning segment. Over 245–249 (PNKLH) the chain is Cytoplasmic. Residues 250–270 (FALSFMNIVDVLAILPFYVSL) form a helical membrane-spanning segment. Residues 271 to 289 (TLTHLGARMMELTNVQQAV) are Extracellular-facing. Residues 290-310 (QALRIMRIARIFKLARHSSGL) form a helical; Voltage-sensor membrane-spanning segment. The Cytoplasmic portion of the chain corresponds to 311 to 324 (QTLTYALKRSFKEL). The helical transmembrane segment at 325–345 (GLLLMYLAVGIFVFSALGYTM) threads the bilayer. At 346–357 (EQSHPETLFKSI) the chain is on the extracellular side. The pore-forming intramembrane region spans 358-378 (PQSFWWAIITMTTVGYGDIYP). Positions 370-375 (TVGYGD) match the Selectivity filter motif. At 379–385 (KTTLGKL) the chain is on the extracellular side. Residues 386 to 406 (NAAISFLCGVIAIALPIHPII) traverse the membrane as a helical segment. At 407-493 (NNFVRYYNKQ…HHRTRLQSCK (87 aa)) the chain is on the cytoplasmic side. Positions 433–468 (NSSSAESKPGGSRSDLDTLPPEPAAREGPSWGSRLK) are disordered.

It belongs to the potassium channel family. F (TC 1.A.1.2) subfamily. Kv5.1/KCNF1 sub-subfamily. In terms of assembly, heterotetramer with KCNB1 or KCNB2. Expressed in brain namely in the piriform cortex, olfactory tubercle, and medial habenular nucleus. Also expressed in the medial amygdaloid nuclei and the lateral amygdaloid area.

The protein resides in the cell membrane. Functionally, regulatory alpha-subunit of the voltage-gated potassium (Kv) channel which, when coassembled with KCNB1 or KCNB2, can modulate their expression and their gating kinetics by acting on deactivation upon repolarization and inactivation during maintained depolarization. Accelerates inactivation but has relatively little effect on deactivation. Coexpression with KCNB1 or KCNB2 markedly slows inactivation. Each modulatory subunit has its own specific properties of regulation, and can lead to extensive inhibitions, to large changes in kinetics, and/or to large shifts in the voltage dependencies of the inactivation process. The gating kinetics depends on the nature and stoichiometry of the associated regulatory sunbunit. Fails to produce a potassium current when expressed alone. In Rattus norvegicus (Rat), this protein is Voltage-gated potassium channel regulatory subunit KCNF1.